A 247-amino-acid polypeptide reads, in one-letter code: Proteasome subunit alpha (247 aa).

The protein belongs to the peptidase T1A family. As to quaternary structure, the 20S proteasome core is composed of 14 alpha and 14 beta subunits that assemble into four stacked heptameric rings, resulting in a barrel-shaped structure. The two inner rings, each composed of seven catalytic beta subunits, are sandwiched by two outer rings, each composed of seven alpha subunits. The catalytic chamber with the active sites is on the inside of the barrel. Has a gated structure, the ends of the cylinder being occluded by the N-termini of the alpha-subunits. Is capped at one or both ends by the proteasome regulatory ATPase, PAN.

It is found in the cytoplasm. The formation of the proteasomal ATPase PAN-20S proteasome complex, via the docking of the C-termini of PAN into the intersubunit pockets in the alpha-rings, triggers opening of the gate for substrate entry. Interconversion between the open-gate and close-gate conformations leads to a dynamic regulation of the 20S proteasome proteolysis activity. Its function is as follows. Component of the proteasome core, a large protease complex with broad specificity involved in protein degradation. The protein is Proteasome subunit alpha of Methanosarcina thermophila.